The primary structure comprises 150 residues: Large-conductance mechanosensitive channel (150 aa).

A run of 2 helical transmembrane segments spans residues 14–34 and 81–101; these read VIDL…VTSF and GVFL…FLVV.

Belongs to the MscL family. In terms of assembly, homopentamer.

The protein localises to the cell membrane. Channel that opens in response to stretch forces in the membrane lipid bilayer. May participate in the regulation of osmotic pressure changes within the cell. This chain is Large-conductance mechanosensitive channel, found in Syntrophomonas wolfei subsp. wolfei (strain DSM 2245B / Goettingen).